The primary structure comprises 72 residues: DNA-directed RNA polymerase subunit omega (72 aa).

It belongs to the RNA polymerase subunit omega family. The RNAP catalytic core consists of 2 alpha, 1 beta, 1 beta' and 1 omega subunit. When a sigma factor is associated with the core the holoenzyme is formed, which can initiate transcription.

The enzyme catalyses RNA(n) + a ribonucleoside 5'-triphosphate = RNA(n+1) + diphosphate. In terms of biological role, promotes RNA polymerase assembly. Latches the N- and C-terminal regions of the beta' subunit thereby facilitating its interaction with the beta and alpha subunits. The protein is DNA-directed RNA polymerase subunit omega of Francisella tularensis subsp. holarctica (strain LVS).